Consider the following 390-residue polypeptide: Terminal nucleotidyltransferase 5C (390 aa).

The protein belongs to the TENT family.

The protein resides in the nucleus. It is found in the cytoplasm. Its subcellular location is the cytoskeleton. The protein localises to the microtubule organizing center. It localises to the centrosome. It carries out the reaction RNA(n) + ATP = RNA(n)-3'-adenine ribonucleotide + diphosphate. Functionally, catalyzes the transfer of one adenosine molecule from an ATP to an mRNA poly(A) tail bearing a 3'-OH terminal group and enhances mRNA stability and gene expression. In Gallus gallus (Chicken), this protein is Terminal nucleotidyltransferase 5C.